The primary structure comprises 156 residues: Ribosome maturation factor RimP (156 aa).

It belongs to the RimP family.

It localises to the cytoplasm. Required for maturation of 30S ribosomal subunits. The polypeptide is Ribosome maturation factor RimP (Bacillus cytotoxicus (strain DSM 22905 / CIP 110041 / 391-98 / NVH 391-98)).